We begin with the raw amino-acid sequence, 247 residues long: ATP synthase subunit a, chloroplastic (247 aa).

The next 5 helical transmembrane spans lie at 38 to 58 (QVLI…IIAV), 95 to 115 (VPFI…GALL), 133 to 153 (DINT…YAGL), 199 to 219 (LVVV…VMFL), and 220 to 240 (GLFT…AYIG).

Belongs to the ATPase A chain family. In terms of assembly, F-type ATPases have 2 components, CF(1) - the catalytic core - and CF(0) - the membrane proton channel. CF(1) has five subunits: alpha(3), beta(3), gamma(1), delta(1), epsilon(1). CF(0) has four main subunits: a, b, b' and c.

The protein resides in the plastid. It localises to the chloroplast thylakoid membrane. In terms of biological role, key component of the proton channel; it plays a direct role in the translocation of protons across the membrane. This is ATP synthase subunit a, chloroplastic from Phalaenopsis aphrodite subsp. formosana (Moth orchid).